We begin with the raw amino-acid sequence, 180 residues long: ATP synthase subunit delta (180 aa).

It belongs to the ATPase delta chain family. F-type ATPases have 2 components, F(1) - the catalytic core - and F(0) - the membrane proton channel. F(1) has five subunits: alpha(3), beta(3), gamma(1), delta(1), epsilon(1). F(0) has three main subunits: a(1), b(2) and c(10-14). The alpha and beta chains form an alternating ring which encloses part of the gamma chain. F(1) is attached to F(0) by a central stalk formed by the gamma and epsilon chains, while a peripheral stalk is formed by the delta and b chains.

It is found in the cell inner membrane. F(1)F(0) ATP synthase produces ATP from ADP in the presence of a proton or sodium gradient. F-type ATPases consist of two structural domains, F(1) containing the extramembraneous catalytic core and F(0) containing the membrane proton channel, linked together by a central stalk and a peripheral stalk. During catalysis, ATP synthesis in the catalytic domain of F(1) is coupled via a rotary mechanism of the central stalk subunits to proton translocation. Functionally, this protein is part of the stalk that links CF(0) to CF(1). It either transmits conformational changes from CF(0) to CF(1) or is implicated in proton conduction. This chain is ATP synthase subunit delta, found in Acidovorax sp. (strain JS42).